We begin with the raw amino-acid sequence, 953 residues long: Trafficking kinesin-binding protein 1 (953 aa).

The region spanning leucine 47–threonine 354 is the HAP1 N-terminal domain. The stretch at glutamine 104–proline 356 forms a coiled coil. The segment at threonine 359–tyrosine 509 is interaction with HGS. A glycan (O-linked (GlcNAc) serine) is linked at serine 447. Residues alanine 472–leucine 495 form a disordered region. The stretch at serine 492–glutamate 532 forms a coiled coil. Serine 537 carries the phosphoserine modification. The tract at residues proline 658–threonine 672 is interaction with OGT. Residues serine 680 and serine 719 are each glycosylated (O-linked (GlcNAc) serine). Serine 719 carries the post-translational modification Phosphoserine. Residues valine 777–serine 796 are disordered. The segment covering proline 786–serine 796 has biased composition (low complexity). Serine 919 bears the Phosphoserine mark. An O-linked (GlcNAc) threonine glycan is attached at threonine 935.

Belongs to the milton family. Interacts with RHOT1 and RHOT2. Found in a complex with KIF5B, OGT, RHOT1 and RHOT2. Interacts with HGS. Interacts with GABRA1. Interacts with KIF5C. Interacts with OGT; stable interaction is not required for glycosylation of this protein by OGT. Isoform 1 interacts with OGT. Post-translationally, O-glycosylated. Glycosylated by OGT; glycosylation in response to increased extracellular glucose levels is required for and leads to regulation of mitochondrial motility by OGT. In terms of tissue distribution, high expression in spinal cord and moderate expression in all other tissues and specific brain regions examined. Expressed in all cell lines examined.

The protein resides in the cytoplasm. Its subcellular location is the nucleus. It localises to the mitochondrion. It is found in the early endosome. The protein localises to the endosome. The protein resides in the mitochondrion membrane. Its subcellular location is the cell cortex. Its function is as follows. Involved in the regulation of endosome-to-lysosome trafficking, including endocytic trafficking of EGF-EGFR complexes and GABA-A receptors. Involved in mitochondrial motility. When O-glycosylated, abolishes mitochondrial motility. Crucial for recruiting OGT to the mitochondrial surface of neuronal processes. TRAK1 and RHOT form an essential protein complex that links KIF5 to mitochondria for light chain-independent, anterograde transport of mitochondria. The polypeptide is Trafficking kinesin-binding protein 1 (TRAK1) (Homo sapiens (Human)).